A 382-amino-acid chain; its full sequence is ATP phosphoribosyltransferase regulatory subunit (382 aa).

This sequence belongs to the class-II aminoacyl-tRNA synthetase family. HisZ subfamily. As to quaternary structure, heteromultimer composed of HisG and HisZ subunits.

It is found in the cytoplasm. The protein operates within amino-acid biosynthesis; L-histidine biosynthesis; L-histidine from 5-phospho-alpha-D-ribose 1-diphosphate: step 1/9. Its function is as follows. Required for the first step of histidine biosynthesis. May allow the feedback regulation of ATP phosphoribosyltransferase activity by histidine. In Albidiferax ferrireducens (strain ATCC BAA-621 / DSM 15236 / T118) (Rhodoferax ferrireducens), this protein is ATP phosphoribosyltransferase regulatory subunit.